Here is a 396-residue protein sequence, read N- to C-terminus: CCA-adding enzyme (396 aa).

ATP is bound by residues G27 and R30. The CTP site is built by G27 and R30. Mg(2+)-binding residues include D40 and D42. Residues R111, D154, R157, R160, and R163 each coordinate ATP. Residues R111, D154, R157, R160, and R163 each contribute to the CTP site.

It belongs to the tRNA nucleotidyltransferase/poly(A) polymerase family. Bacterial CCA-adding enzyme type 3 subfamily. As to quaternary structure, homodimer. The cofactor is Mg(2+).

It carries out the reaction a tRNA precursor + 2 CTP + ATP = a tRNA with a 3' CCA end + 3 diphosphate. The catalysed reaction is a tRNA with a 3' CCA end + 2 CTP + ATP = a tRNA with a 3' CCACCA end + 3 diphosphate. In terms of biological role, catalyzes the addition and repair of the essential 3'-terminal CCA sequence in tRNAs without using a nucleic acid template. Adds these three nucleotides in the order of C, C, and A to the tRNA nucleotide-73, using CTP and ATP as substrates and producing inorganic pyrophosphate. tRNA 3'-terminal CCA addition is required both for tRNA processing and repair. Also involved in tRNA surveillance by mediating tandem CCA addition to generate a CCACCA at the 3' terminus of unstable tRNAs. While stable tRNAs receive only 3'-terminal CCA, unstable tRNAs are marked with CCACCA and rapidly degraded. The sequence is that of CCA-adding enzyme from Bacillus velezensis (strain DSM 23117 / BGSC 10A6 / LMG 26770 / FZB42) (Bacillus amyloliquefaciens subsp. plantarum).